Here is a 335-residue protein sequence, read N- to C-terminus: S-adenosylmethionine:tRNA ribosyltransferase-isomerase (335 aa).

It belongs to the QueA family. As to quaternary structure, monomer.

The protein resides in the cytoplasm. The enzyme catalyses 7-aminomethyl-7-carbaguanosine(34) in tRNA + S-adenosyl-L-methionine = epoxyqueuosine(34) in tRNA + adenine + L-methionine + 2 H(+). Its pathway is tRNA modification; tRNA-queuosine biosynthesis. Transfers and isomerizes the ribose moiety from AdoMet to the 7-aminomethyl group of 7-deazaguanine (preQ1-tRNA) to give epoxyqueuosine (oQ-tRNA). This Thermosipho africanus (strain TCF52B) protein is S-adenosylmethionine:tRNA ribosyltransferase-isomerase.